The chain runs to 91 residues: Defensin-like protein 95 (91 aa).

The signal sequence occupies residues 1–27; it reads MGSLKLSTFAIVVCLSILLISPIEVNG. Intrachain disulfides connect Cys-31/Cys-76, Cys-38/Cys-63, Cys-47/Cys-73, and Cys-51/Cys-75.

This sequence belongs to the DEFL family.

It localises to the secreted. In Arabidopsis thaliana (Mouse-ear cress), this protein is Defensin-like protein 95.